Here is a 154-residue protein sequence, read N- to C-terminus: Large ribosomal subunit protein uL13 (154 aa).

Belongs to the universal ribosomal protein uL13 family. Part of the 50S ribosomal subunit.

In terms of biological role, this protein is one of the early assembly proteins of the 50S ribosomal subunit, although it is not seen to bind rRNA by itself. It is important during the early stages of 50S assembly. In Agrobacterium fabrum (strain C58 / ATCC 33970) (Agrobacterium tumefaciens (strain C58)), this protein is Large ribosomal subunit protein uL13.